A 227-amino-acid chain; its full sequence is Cytidylate kinase (227 aa).

Glycine 12–threonine 20 provides a ligand contact to ATP.

Belongs to the cytidylate kinase family. Type 1 subfamily.

The protein resides in the cytoplasm. The enzyme catalyses CMP + ATP = CDP + ADP. The catalysed reaction is dCMP + ATP = dCDP + ADP. This chain is Cytidylate kinase, found in Erwinia tasmaniensis (strain DSM 17950 / CFBP 7177 / CIP 109463 / NCPPB 4357 / Et1/99).